Reading from the N-terminus, the 302-residue chain is MRIVFCGTSSFAVPSLELLASEFEIALVITQPDKPAGRGQKLTPPPVKQKALELNLNISQPEKISFLKEELLNIKPDIMIVVAYGQIIPKSMLEIPTFKSLNLHGSVLPKYRGAAPIQRALMQGEKETGNTVILMSSKMDEGDILSVESIPIEQEDNYEKLSNKLSIKGAKLLKDTILSWVSGSIKPIPQNHQEATYAMPILKEELRICFKTSAFSIHNKIRGVYPNAYGVSGDRNIKILKTNIVEKDLNLKPGELFYDGKSLFVGTGDLPLEILEIMSLKGKRVSGKEFAMGYLNQVKKFY.

(6S)-5,6,7,8-tetrahydrofolate is bound at residue 106 to 109; the sequence is SVLP.

It belongs to the Fmt family.

The enzyme catalyses L-methionyl-tRNA(fMet) + (6R)-10-formyltetrahydrofolate = N-formyl-L-methionyl-tRNA(fMet) + (6S)-5,6,7,8-tetrahydrofolate + H(+). Attaches a formyl group to the free amino group of methionyl-tRNA(fMet). The formyl group appears to play a dual role in the initiator identity of N-formylmethionyl-tRNA by promoting its recognition by IF2 and preventing the misappropriation of this tRNA by the elongation apparatus. In Hydrogenobaculum sp. (strain Y04AAS1), this protein is Methionyl-tRNA formyltransferase.